The primary structure comprises 254 residues: MSELVYGIHTVESIVNQSPNRILIVYIVSNPRDLRLKSLIYRIRKMNINIQECTRRVLNIKSMKSAHQGIIAEVIPMPALNEDYLLHFLKTKNNIIPLLLVLDGITDPHNLGACIRSADAAGVHMIIVPRDRSANVNATVRKVASGSSDRVPFVRVTNLSRTLKLLKKYNIYIVGSVLRSNQILFNTRLIDPIALVMGSESSGIRRLTRENCDKLVHIPTLQSTVSLNVSVATGIFLFETVRQRKYQNGFINYS.

S-adenosyl-L-methionine-binding residues include G198, I218, and L227.

The protein belongs to the class IV-like SAM-binding methyltransferase superfamily. RNA methyltransferase TrmH family. RlmB subfamily. In terms of assembly, homodimer.

The protein localises to the cytoplasm. The catalysed reaction is guanosine(2251) in 23S rRNA + S-adenosyl-L-methionine = 2'-O-methylguanosine(2251) in 23S rRNA + S-adenosyl-L-homocysteine + H(+). In terms of biological role, specifically methylates the ribose of guanosine 2251 in 23S rRNA. The polypeptide is 23S rRNA (guanosine-2'-O-)-methyltransferase RlmB (Blochmanniella floridana).